Consider the following 295-residue polypeptide: MSIIINGKKTANDLCEELSKKIDILKKEYNVFPCLKVILVGSNPASQVYVRNKQRKAESIGISSETIVLPDSISEDELIEKVNTLNEDSSVHGILVQLPLPKHISASRIINTVSVEKDVDGFHDENVGRLVKGEKNCLIPCTPKGSLHLIKSVENNLSGKNAVIIGRSNIVGKPMFHLLLQENCTVTILHSQSRDLADYCSKADIVVAAVGKPNFVQPDWIKKGAIVIDVGINSINIGNQSKLVGDVDFEGVKEKVKAITPVPGGVGPMTIAFLMINTLVAACLQKGVDPSDFIA.

NADP(+)-binding positions include 166–168 (GRS), serine 191, and isoleucine 232.

The protein belongs to the tetrahydrofolate dehydrogenase/cyclohydrolase family. Homodimer.

It carries out the reaction (6R)-5,10-methylene-5,6,7,8-tetrahydrofolate + NADP(+) = (6R)-5,10-methenyltetrahydrofolate + NADPH. The catalysed reaction is (6R)-5,10-methenyltetrahydrofolate + H2O = (6R)-10-formyltetrahydrofolate + H(+). The protein operates within one-carbon metabolism; tetrahydrofolate interconversion. Catalyzes the oxidation of 5,10-methylenetetrahydrofolate to 5,10-methenyltetrahydrofolate and then the hydrolysis of 5,10-methenyltetrahydrofolate to 10-formyltetrahydrofolate. The sequence is that of Bifunctional protein FolD from Wolbachia pipientis subsp. Culex pipiens (strain wPip).